The following is a 1807-amino-acid chain: Phospholipase D (1807 aa).

The segment at 1–28 (MPGPDDDVREPTAAARTNNSGYGLRAAP) is disordered. 3 helical membrane-spanning segments follow: residues 257-277 (IAFVSAIVGFIFPICLVIVTS), 305-325 (AGVFLGLAVLGGILFFAVFVY), and 587-607 (VYYILFLFAGGIIAPVVGFLA). Residues 697 to 734 (TASRMGTGNLAPASSRVDSSTQSEDSFEAPKPPPSSVS) form a disordered region. PLD phosphodiesterase domains follow at residues 853–880 (GFWSHHEKIVCIDQSLAFVGGLDLCFGR) and 1249–1276 (EQIYIHSKLMIADDRCAILGSANINDRS). Catalysis depends on residues H858, K860, D865, H1254, K1256, and D1261. 3 stretches are compositionally biased toward polar residues: residues 1531–1547 (FSRSNSVSTPTNFSQLD), 1568–1578 (YNSNSMPSNAS), and 1597–1614 (YPNSPSVASFQHTPQSPA). The disordered stretch occupies residues 1531–1621 (FSRSNSVSTP…SPAIATGARS (91 aa)).

The protein belongs to the phospholipase D family. TM-PLD subfamily.

It localises to the membrane. It catalyses the reaction a 1,2-diacyl-sn-glycero-3-phosphocholine + H2O = a 1,2-diacyl-sn-glycero-3-phosphate + choline + H(+). Its function is as follows. Hydrolyzes glycerol-phospholipids at the terminal phosphodiesteric bond. The polypeptide is Phospholipase D (Phytophthora infestans (Potato late blight agent)).